Here is a 397-residue protein sequence, read N- to C-terminus: Odorant receptor 2a (397 aa).

The Cytoplasmic portion of the chain corresponds to 1–38; it reads MEKQEDFKLNTHSAVYYHWRVWELTGLMRPPGVSSLLY. Residues 39-59 traverse the membrane as a helical segment; sequence VVYSITVNLVVTVLFPLSLLA. The Extracellular portion of the chain corresponds to 60–72; sequence RLLFTTNMAGLCE. Residues 73-92 form a helical membrane-spanning segment; it reads NLTITITDIVANLKFANVYM. Over 93–131 the chain is Cytoplasmic; it reads VRKQLHEIRSLLRLMDARARLVGDPEEISALRKEVNIAQ. A helical transmembrane segment spans residues 132-150; the sequence is GTFRTFASIFVFGTTLSCV. The Extracellular segment spans residues 151-176; the sequence is RVVVRPDRELLYPAWFGVDWMHSTRN. A helical membrane pass occupies residues 177-197; sequence YVLINIYQLFGLIVQAIQNCA. Residues 198-272 are Cytoplasmic-facing; the sequence is SDSYPPAFLC…IIQRVLSVPC (75 aa). Residues 273–293 form a helical membrane-spanning segment; the sequence is MAQFVCSAAVQCTVAMHFLYV. Residues 294–301 lie on the Extracellular side of the membrane; sequence ADDHDHTA. A helical transmembrane segment spans residues 302-322; it reads MIISIVFFSAVTLEVFVICYF. Residues 323-363 are Cytoplasmic-facing; it reads GDRMRTQSEALCDAFYDCNWIEQLPKFKRELLFTLARTQRP. A helical transmembrane segment spans residues 364-383; that stretch reads SLIYAGNYIALSLETFEQVM. The Extracellular segment spans residues 384–397; sequence RFTYSVFTLLLRAK.

Belongs to the insect chemoreceptor superfamily. Heteromeric odorant receptor channel (TC 1.A.69) family. Or2a subfamily. In terms of assembly, interacts with Orco. Complexes exist early in the endomembrane system in olfactory sensory neurons (OSNs), coupling these complexes to the conserved ciliary trafficking pathway. Expressed in 20 sensory neurons on the distal edge of the antenna.

It is found in the cell membrane. Functionally, odorant receptor which mediates acceptance or avoidance behavior, depending on its substrates. The odorant receptor repertoire encodes a large collection of odor stimuli that vary widely in identity, intensity, and duration. May form a complex with Orco to form odorant-sensing units, providing sensitive and prolonged odorant signaling and calcium permeability. This Drosophila melanogaster (Fruit fly) protein is Odorant receptor 2a (Or2a).